A 439-amino-acid polypeptide reads, in one-letter code: Prenyltransferase iacE (439 aa).

Substrate-binding positions include 88-89, glutamate 97, arginine 112, lysine 198, tyrosine 200, arginine 271, lysine 273, and tyrosine 275; that span reads WI.

The protein belongs to the tryptophan dimethylallyltransferase family.

It carries out the reaction siccayne + dimethylallyl diphosphate = pestalodiol + diphosphate. The protein operates within secondary metabolite biosynthesis. Prenyltransferase; part of the gene cluster that mediates the biosynthesis of iso-A82775C, a enylepoxycyclohexane and biosynthetic precursor of the chloropestolide anticancer natural products. Within the cluster, the prenyltransferase iacE prenylates siccayne to generate pestalodiol E, using dimethylallyl diphosphate (DMAPP) as cosubstrate. The probable oxidoreductase iacF is then involved in the epoxidation of pestalodiol F to pestalodiol F, which is further converted to pestalofone A by the short-chain dehydrogenase/reductase iacG. Iso-A82775C is subsequently generated from pestalofone A by the short-chain dehydrogenase/reductase iacC. Iso-A82775C is further condensed with maldoxin via a Diels-Alder reaction to produce the anticancer natural products chloropestolides A to E. This is Prenyltransferase iacE from Pestalotiopsis fici (strain W106-1 / CGMCC3.15140).